The primary structure comprises 917 residues: Protein translocase subunit SecA (917 aa).

Residues Q87, 105–109 (GEGKT), and D516 each bind ATP. The Zn(2+) site is built by C901, C903, C912, and H913.

Belongs to the SecA family. As to quaternary structure, monomer and homodimer. Part of the essential Sec protein translocation apparatus which comprises SecA, SecYEG and auxiliary proteins SecDF-YajC and YidC. Zn(2+) is required as a cofactor.

The protein resides in the cell inner membrane. It is found in the cytoplasm. It catalyses the reaction ATP + H2O + cellular proteinSide 1 = ADP + phosphate + cellular proteinSide 2.. Part of the Sec protein translocase complex. Interacts with the SecYEG preprotein conducting channel. Has a central role in coupling the hydrolysis of ATP to the transfer of proteins into and across the cell membrane, serving both as a receptor for the preprotein-SecB complex and as an ATP-driven molecular motor driving the stepwise translocation of polypeptide chains across the membrane. The chain is Protein translocase subunit SecA from Verminephrobacter eiseniae (strain EF01-2).